We begin with the raw amino-acid sequence, 64 residues long: Ferredoxin-2 (64 aa).

The 28-residue stretch at 2 to 29 (RIHVDQDKCCGAGSCVLAAPDVFDQREE) folds into the 4Fe-4S ferredoxin-type domain. [3Fe-4S] cluster-binding residues include cysteine 10, cysteine 16, and cysteine 55.

The cofactor is [3Fe-4S] cluster.

Electron transport protein for the cytochrome P-450-SU2 system. The polypeptide is Ferredoxin-2 (subB) (Streptomyces griseolus).